A 387-amino-acid polypeptide reads, in one-letter code: ATP-dependent Clp protease proteolytic subunit-related protein 1, chloroplastic (387 aa).

A chloroplast-targeting transit peptide spans 1–41 (MATALVSPLTSQLNHEAVCSKFVLPKSPFMSGSKLFSSNMP). Over residues 355 to 365 (QDSSFEKRDYD) the composition is skewed to basic and acidic residues. Positions 355–387 (QDSSFEKRDYDGTLAQRAMRPGGGSPAAPAGLR) are disordered.

Belongs to the peptidase S14 family. In terms of assembly, component of the chloroplastic Clp protease core complex which consist of at least 16 proteins: CLPP4 (3 copies), CLPP5 (3 copies), CLPR4 (2 copies), ClpP1 (1 copy), CLPP6 (1 copy), CLPR2 (1 copy), CLPT1 (1 copy), CLPT2 (1 copy) and 3 copies of CLPP3 and/or CLPR1 and/or CLPR3. The core complex is organized in two heptameric rings, one containing CLPP3,4,5,6 in a 1:2:3:1 ratio and the other CLPP1 and CLPR1,2,3,4 in a 3:1:1:1:1 ratio.

It is found in the plastid. It localises to the chloroplast stroma. Its function is as follows. Required for chloroplast development and differentiation. The chain is ATP-dependent Clp protease proteolytic subunit-related protein 1, chloroplastic from Arabidopsis thaliana (Mouse-ear cress).